The sequence spans 358 residues: tRNA-specific 2-thiouridylase MnmA (358 aa).

ATP contacts are provided by residues 6–13 (ALSGGVDS) and M32. Catalysis depends on C103, which acts as the Nucleophile. A disulfide bridge links C103 with C201. G127 contacts ATP. The tract at residues 151–153 (KDQ) is interaction with tRNA. C201 acts as the Cysteine persulfide intermediate in catalysis.

The protein belongs to the MnmA/TRMU family.

The protein resides in the cytoplasm. The enzyme catalyses S-sulfanyl-L-cysteinyl-[protein] + uridine(34) in tRNA + AH2 + ATP = 2-thiouridine(34) in tRNA + L-cysteinyl-[protein] + A + AMP + diphosphate + H(+). Catalyzes the 2-thiolation of uridine at the wobble position (U34) of tRNA, leading to the formation of s(2)U34. This Thermotoga maritima (strain ATCC 43589 / DSM 3109 / JCM 10099 / NBRC 100826 / MSB8) protein is tRNA-specific 2-thiouridylase MnmA.